The following is a 234-amino-acid chain: LexA repressor (234 aa).

Positions 26 to 46 (FEEMKEALDLKSKSGVHRLIS) form a DNA-binding region, H-T-H motif. Residues 73 to 100 (AVGKAAPVSQREAANTNSALPPLRAAPK) form a disordered region. The span at 91-100 (ALPPLRAAPK) shows a compositional bias: low complexity. Active-site for autocatalytic cleavage activity residues include serine 154 and lysine 192.

It belongs to the peptidase S24 family. In terms of assembly, homodimer.

The enzyme catalyses Hydrolysis of Ala-|-Gly bond in repressor LexA.. Its function is as follows. Represses a number of genes involved in the response to DNA damage (SOS response), including recA and lexA. In the presence of single-stranded DNA, RecA interacts with LexA causing an autocatalytic cleavage which disrupts the DNA-binding part of LexA, leading to derepression of the SOS regulon and eventually DNA repair. This Novosphingobium aromaticivorans (strain ATCC 700278 / DSM 12444 / CCUG 56034 / CIP 105152 / NBRC 16084 / F199) protein is LexA repressor.